Reading from the N-terminus, the 495-residue chain is UDP-N-acetylmuramoyl-L-alanyl-D-glutamate--2,6-diaminopimelate ligase (495 aa).

UDP-N-acetyl-alpha-D-muramoyl-L-alanyl-D-glutamate-binding positions include L27, S29, and 44-46 (HQA). 116 to 122 (GTNGKTT) serves as a coordination point for ATP. UDP-N-acetyl-alpha-D-muramoyl-L-alanyl-D-glutamate contacts are provided by residues N157, 158–159 (TT), S185, Q191, and R193. N6-carboxylysine is present on K225. Residues R390, 414 to 417 (DNPR), G465, and E469 contribute to the meso-2,6-diaminopimelate site. Positions 414–417 (DNPR) match the Meso-diaminopimelate recognition motif motif.

Belongs to the MurCDEF family. MurE subfamily. Requires Mg(2+) as cofactor. In terms of processing, carboxylation is probably crucial for Mg(2+) binding and, consequently, for the gamma-phosphate positioning of ATP.

It localises to the cytoplasm. The catalysed reaction is UDP-N-acetyl-alpha-D-muramoyl-L-alanyl-D-glutamate + meso-2,6-diaminopimelate + ATP = UDP-N-acetyl-alpha-D-muramoyl-L-alanyl-gamma-D-glutamyl-meso-2,6-diaminopimelate + ADP + phosphate + H(+). It functions in the pathway cell wall biogenesis; peptidoglycan biosynthesis. Its function is as follows. Catalyzes the addition of meso-diaminopimelic acid to the nucleotide precursor UDP-N-acetylmuramoyl-L-alanyl-D-glutamate (UMAG) in the biosynthesis of bacterial cell-wall peptidoglycan. This Salmonella typhimurium (strain LT2 / SGSC1412 / ATCC 700720) protein is UDP-N-acetylmuramoyl-L-alanyl-D-glutamate--2,6-diaminopimelate ligase.